A 127-amino-acid polypeptide reads, in one-letter code: Fluoride-specific ion channel FluC 1 (127 aa).

The next 3 membrane-spanning stretches (helical) occupy residues Pro-6 to Leu-26, Phe-29 to Phe-49, and Glu-95 to Gly-115.

It belongs to the fluoride channel Fluc/FEX (TC 1.A.43) family.

The protein localises to the cell membrane. The catalysed reaction is fluoride(in) = fluoride(out). Functionally, fluoride-specific ion channel. Important for reducing fluoride concentration in the cell, thus reducing its toxicity. In Haloarcula marismortui (strain ATCC 43049 / DSM 3752 / JCM 8966 / VKM B-1809) (Halobacterium marismortui), this protein is Fluoride-specific ion channel FluC 1.